The chain runs to 486 residues: ATP synthase subunit beta (486 aa).

170–177 is a binding site for ATP; it reads GGAGVGKT.

Belongs to the ATPase alpha/beta chains family. As to quaternary structure, F-type ATPases have 2 components, CF(1) - the catalytic core - and CF(0) - the membrane proton channel. CF(1) has five subunits: alpha(3), beta(3), gamma(1), delta(1), epsilon(1). CF(0) has three main subunits: a(1), b(2) and c(9-12). The alpha and beta chains form an alternating ring which encloses part of the gamma chain. CF(1) is attached to CF(0) by a central stalk formed by the gamma and epsilon chains, while a peripheral stalk is formed by the delta and b chains.

Its subcellular location is the cell membrane. It carries out the reaction ATP + H2O + 4 H(+)(in) = ADP + phosphate + 5 H(+)(out). In terms of biological role, produces ATP from ADP in the presence of a proton gradient across the membrane. The catalytic sites are hosted primarily by the beta subunits. In Clavibacter sepedonicus (Clavibacter michiganensis subsp. sepedonicus), this protein is ATP synthase subunit beta.